The sequence spans 384 residues: Sensor-like histidine kinase SenX3 (384 aa).

The 217-residue stretch at 153–369 folds into the Histidine kinase domain; that stretch reads NVSHELKTPV…TFTLSIPEYP (217 aa). His-156 carries the phosphohistidine; by autocatalysis modification. The tract at residues 360 to 384 is disordered; it reads TFTLSIPEYPDPESHSDEREDQRER. The span at 371–384 shows a compositional bias: basic and acidic residues; it reads PESHSDEREDQRER.

Autophosphorylated.

It localises to the cell membrane. It carries out the reaction ATP + protein L-histidine = ADP + protein N-phospho-L-histidine.. In terms of biological role, member of the two-component regulatory system SenX3/RegX3 involved in stress response. The system is involved in phosphate starvation response. Probably exhibits a dual role as a phosphatase or a phosphodonor for the response regulator RegX3, depending upon phosphate availability. When environmental phosphate is abundant, SenX3 is required to maintain RegX3 in an unphosphorylated state, where it is unable to bind target DNA. Under conditions of phosphate limitation, SenX3 autophosphorylates and then transfers the phosphate group to RegX3. Probably does not itself sense phosphate concentrations, which may be relayed to SenX3 by the PstSCAB phosphate transporter system. The chain is Sensor-like histidine kinase SenX3 from Mycolicibacterium smegmatis (strain ATCC 700084 / mc(2)155) (Mycobacterium smegmatis).